The primary structure comprises 115 residues: Large ribosomal subunit protein uL22 (115 aa).

This sequence belongs to the universal ribosomal protein uL22 family. As to quaternary structure, part of the 50S ribosomal subunit.

This protein binds specifically to 23S rRNA; its binding is stimulated by other ribosomal proteins, e.g. L4, L17, and L20. It is important during the early stages of 50S assembly. It makes multiple contacts with different domains of the 23S rRNA in the assembled 50S subunit and ribosome. In terms of biological role, the globular domain of the protein is located near the polypeptide exit tunnel on the outside of the subunit, while an extended beta-hairpin is found that lines the wall of the exit tunnel in the center of the 70S ribosome. This chain is Large ribosomal subunit protein uL22, found in Streptomyces avermitilis (strain ATCC 31267 / DSM 46492 / JCM 5070 / NBRC 14893 / NCIMB 12804 / NRRL 8165 / MA-4680).